The sequence spans 186 residues: Transcription factor pgmR (186 aa).

The segment at residues 19–46 is a DNA-binding region (zn(2)-C6 fungal-type); that stretch reads CDECGAAKLKCDRGHPSCGRCISLGLKC. The interval 52–98 is disordered; that stretch reads RKAGKPRRDAQSATRPPPTPGDSGPPLDYNSFGPTSPPSSVGDGATL.

Its subcellular location is the nucleus. Its function is as follows. Transcription factor that specifically regulates the expression of the pgm gene cluster that mediates the biosynthesis of cryptic naphthoquinones derived pigments responsible for the coloration of the fruiting bodies. The chain is Transcription factor pgmR from Aspergillus terreus (strain NIH 2624 / FGSC A1156).